The following is a 292-amino-acid chain: E3 ubiquitin-protein ligase RNF144A (292 aa).

Positions proline 16–leucine 236 are TRIAD supradomain. The Zn(2+) site is built by cysteine 20, cysteine 23, cysteine 43, cysteine 46, cysteine 111, cysteine 116, cysteine 135, cysteine 138, cysteine 143, cysteine 146, histidine 151, cysteine 156, cysteine 185, and cysteine 188. The RING-type 1 zinc-finger motif lies at cysteine 20–cysteine 70. An IBR-type zinc finger spans residues glutamine 91–cysteine 156. Residues cysteine 185–cysteine 214 form an RING-type 2; atypical zinc finger. Cysteine 198 is a catalytic residue. Zn(2+) contacts are provided by cysteine 203, cysteine 206, cysteine 211, cysteine 214, histidine 226, and cysteine 232. Residues valine 250–leucine 270 form a helical membrane-spanning segment.

This sequence belongs to the RBR family. RNF144 subfamily. Self-associates. Interacts with UBE2L3. In terms of processing, auto-ubiquitinated.

It is found in the cell membrane. It localises to the cytoplasmic vesicle membrane. The protein localises to the endosome membrane. The protein resides in the endoplasmic reticulum membrane. The catalysed reaction is [E2 ubiquitin-conjugating enzyme]-S-ubiquitinyl-L-cysteine + [acceptor protein]-L-lysine = [E2 ubiquitin-conjugating enzyme]-L-cysteine + [acceptor protein]-N(6)-ubiquitinyl-L-lysine.. It participates in protein modification; protein ubiquitination. In terms of biological role, E3 ubiquitin-protein ligase which accepts ubiquitin from E2 ubiquitin-conjugating enzymes UBE2L3 and UBE2L6 in the form of a thioester and then directly transfers the ubiquitin to targeted substrates. Mediates the ubiquitination and degradation of the DNA damage kinase PRKDC during DNA damage. Positively regulates DNA virus or exogenous cytosolic DNA-triggered innate immune response by mediating STING1 ubiquitination and increasing its 'Lys-6'-linked ubiquitination and translocation from the endoplasmic reticulum to the Golgi leading to downstream signaling pathways. Plays a positive role in EGF-dependent cell proliferation by prolonging EGF/EGFR signaling during EGF stimulation through EGFR ubiquitination. Increases ERK activity independently of EGFR signaling by promoting polyubiquitination and subsequent degradation of VRK3 in the cytosol. This chain is E3 ubiquitin-protein ligase RNF144A (RNF144A), found in Homo sapiens (Human).